The chain runs to 64 residues: uncharacterized protein (64 aa).

This is an uncharacterized protein from Sulfolobus islandicus filamentous virus (isolate Iceland/Hveragerdi) (SIFV).